The primary structure comprises 195 residues: Sec-independent protein translocase protein TatB (195 aa).

A helical membrane pass occupies residues Phe2–Gly22. The segment covering Val103–Lys125 has biased composition (basic and acidic residues). Residues Val103–Thr195 are disordered. Composition is skewed to polar residues over residues Ser127–Ala139 and Val146–Ser155.

This sequence belongs to the TatB family. In terms of assembly, the Tat system comprises two distinct complexes: a TatABC complex, containing multiple copies of TatA, TatB and TatC subunits, and a separate TatA complex, containing only TatA subunits. Substrates initially bind to the TatABC complex, which probably triggers association of the separate TatA complex to form the active translocon.

The protein resides in the cell membrane. Functionally, part of the twin-arginine translocation (Tat) system that transports large folded proteins containing a characteristic twin-arginine motif in their signal peptide across membranes. Together with TatC, TatB is part of a receptor directly interacting with Tat signal peptides. TatB may form an oligomeric binding site that transiently accommodates folded Tat precursor proteins before their translocation. The chain is Sec-independent protein translocase protein TatB from Corynebacterium jeikeium (strain K411).